The primary structure comprises 937 residues: Bifunctional glutamine synthetase adenylyltransferase/adenylyl-removing enzyme (937 aa).

An adenylyl removase region spans residues 1-436; that stretch reads MSQPIPSASP…AAEFAELLAP (436 aa). Positions 443 to 937 are adenylyl transferase; that stretch reads PDTLADYWRA…QLRFQPGKGA (495 aa).

It belongs to the GlnE family. The cofactor is Mg(2+).

It carries out the reaction [glutamine synthetase]-O(4)-(5'-adenylyl)-L-tyrosine + phosphate = [glutamine synthetase]-L-tyrosine + ADP. The catalysed reaction is [glutamine synthetase]-L-tyrosine + ATP = [glutamine synthetase]-O(4)-(5'-adenylyl)-L-tyrosine + diphosphate. Functionally, involved in the regulation of glutamine synthetase GlnA, a key enzyme in the process to assimilate ammonia. When cellular nitrogen levels are high, the C-terminal adenylyl transferase (AT) inactivates GlnA by covalent transfer of an adenylyl group from ATP to specific tyrosine residue of GlnA, thus reducing its activity. Conversely, when nitrogen levels are low, the N-terminal adenylyl removase (AR) activates GlnA by removing the adenylyl group by phosphorolysis, increasing its activity. The regulatory region of GlnE binds the signal transduction protein PII (GlnB) which indicates the nitrogen status of the cell. This chain is Bifunctional glutamine synthetase adenylyltransferase/adenylyl-removing enzyme, found in Xanthomonas campestris pv. campestris (strain ATCC 33913 / DSM 3586 / NCPPB 528 / LMG 568 / P 25).